We begin with the raw amino-acid sequence, 619 residues long: DBH-like monooxygenase protein 2 (619 aa).

The first 21 residues, 1-21 (MACVLLFRLFLLLVLAAFSQG), serve as a signal peptide directing secretion. Residues 22 to 594 (KRLGPTSPLR…LSGSNTATLR (573 aa)) are Extracellular-facing. In terms of domain architecture, DOMON spans 40-156 (RAVFLRWDFD…DTMRVLAAYG (117 aa)). The active site involves Tyr209. 2 disulfide bridges follow: Cys211/Cys261 and Cys248/Cys271. Cu cation is bound by residues His241 and His242. N-linked (GlcNAc...) asparagine glycosylation is present at Asn250. His309, His390, and His392 together coordinate Cu cation. 2 disulfide bridges follow: Cys366-Cys481 and Cys444-Cys466. Residue His390 is part of the active site. Residue Asn405 is glycosylated (N-linked (GlcNAc...) asparagine). Met465 contributes to the Cu cation binding site. Asn477 carries N-linked (GlcNAc...) asparagine glycosylation. The chain crosses the membrane as a helical span at residues 595–615 (PLPMIAVLFLQGSLSCLLAML). The Cytoplasmic portion of the chain corresponds to 616–619 (QTGV).

Belongs to the copper type II ascorbate-dependent monooxygenase family. It depends on Cu(2+) as a cofactor. As to expression, expressed at low levels in thymus and testis.

It localises to the membrane. In Mus musculus (Mouse), this protein is DBH-like monooxygenase protein 2 (Moxd2).